Consider the following 565-residue polypeptide: MMWGSRRRTRSRWGRSGPMTRGMGAVSRAVGTAWRRSLQLRVVALTLGLSLAVILALGFVLTSQVTNRVLDVKVKAAIEQIERARTTVGGIVNGEEARSLDSSLQLARNTLTSKTDSASGAGTAGTFDAVLMVPGDGPRAATTAGPVDQVPASLRGFVKAGQASYQYATVHTDGFSGPALIVGSPASSQVANLELYLIFPLKNEQATIQLVRGTMITGGAVLLVLLAGIALLVSRQVVVPVRSASRIAERFAEGHLSERMPVRGEDDMARLAMSFNDMAESLSRQITQLEEFGNLQRRFTSDVSHELRTPLTTVRMAADLIYDHSADLDPTLARSTELMVNELDRFESLLNDLLEISRHDAGVAELSVEAVDLRSTVQSALSNVGHLAEDAGIELQVELPAEEVIAEVDTRRVERILRNLIANAIDHAEHKPVKIRMAADEDTVAVTVRDYGVGLRPGEEKLVFSRFWRADPSRVRRSGGTGLGLAISIEDARLHQGRLEAWGEPGVGSCFRLTLPLVRGHKVTTSPLPMKPIPQPSPSGGQSPSTGPQHAKDRARQREHAERSL.

Positions Met-1–Trp-13 are enriched in basic residues. Positions Met-1 to Arg-21 are disordered. The next 2 membrane-spanning stretches (helical) occupy residues Val-42–Thr-62 and Gly-213–Val-233. In terms of domain architecture, HAMP spans Arg-235–Thr-287. Positions Asp-302–Arg-519 constitute a Histidine kinase domain. At His-305 the chain carries Phosphohistidine; by autocatalysis. The interval Thr-524–Leu-565 is disordered. Residues Pro-538–Gln-549 are compositionally biased toward low complexity. Basic and acidic residues predominate over residues His-550–Leu-565.

It localises to the cell membrane. The catalysed reaction is ATP + protein L-histidine = ADP + protein N-phospho-L-histidine.. Member of the two-component regulatory system MtrA/MtrB. Seems to function as a membrane-associated protein kinase that phosphorylates MtrA in response to environmental signals. This Mycolicibacterium paratuberculosis (strain ATCC BAA-968 / K-10) (Mycobacterium paratuberculosis) protein is Sensor histidine kinase MtrB (mtrB).